A 296-amino-acid polypeptide reads, in one-letter code: Uracil phosphoribosyltransferase, chloroplastic (296 aa).

Residues 1–61 (MACSIGNAFR…SSSLSRRTIR (61 aa)) constitute a chloroplast transit peptide. A2 is subject to N-acetylalanine. GTP is bound at residue 148 to 151 (REPI). Residues R158, R183, D211, 216–219 (TGGT), and D282 contribute to the 5-phospho-alpha-D-ribose 1-diphosphate site. 281–283 (GDA) is a uracil binding site.

The protein belongs to the UPRTase family. Requires Mg(2+) as cofactor.

It is found in the plastid. The protein resides in the chloroplast. It catalyses the reaction UMP + diphosphate = 5-phospho-alpha-D-ribose 1-diphosphate + uracil. Its pathway is pyrimidine metabolism; UMP biosynthesis via salvage pathway; UMP from uracil: step 1/1. With respect to regulation, allosterically activated by GTP. In terms of biological role, uracil phosphoribosyltransferase (UPRT) that catalyzes the conversion of uracil and 5-phospho-alpha-D-ribose 1-diphosphate (PRPP) to UMP and diphosphate. Is probably the only functional UPRT, since the dual-domain proteins of the UKL family seem to lack this activity. The chain is Uracil phosphoribosyltransferase, chloroplastic (UPP) from Arabidopsis thaliana (Mouse-ear cress).